Consider the following 78-residue polypeptide: Large ribosomal subunit protein bL28 (78 aa).

The protein belongs to the bacterial ribosomal protein bL28 family.

This is Large ribosomal subunit protein bL28 from Methylococcus capsulatus (strain ATCC 33009 / NCIMB 11132 / Bath).